Here is a 251-residue protein sequence, read N- to C-terminus: CCN family member 5 (251 aa).

The first 23 residues, 1–23 (MRGNPLIHLLAISFLCILSMVYS), serve as a signal peptide directing secretion. The 80-residue stretch at 24–103 (QLCPAPCACP…EEDDGSCEVN (80 aa)) folds into the IGFBP N-terminal domain. 6 disulfide bridges follow: cysteine 26–cysteine 50, cysteine 30–cysteine 52, cysteine 32–cysteine 53, cysteine 39–cysteine 56, cysteine 64–cysteine 78, and cysteine 70–cysteine 100. In terms of domain architecture, VWFC spans 98 to 164 (GSCEVNGRRY…GRCCPEWVCD (67 aa)). The TSP type-1 domain maps to 195–239 (CPNWSTAWGPCSTTCGLGIATRVSNQNRFCQLEIQRRLCLSRPCL). N-linked (GlcNAc...) asparagine glycosylation is present at asparagine 197.

Belongs to the CCN family.

It is found in the secreted. Its function is as follows. May play an important role in modulating bone turnover. Promotes the adhesion of osteoblast cells and inhibits the binding of fibrinogen to integrin receptors. In addition, inhibits osteocalcin production. The chain is CCN family member 5 (Ccn5) from Mus musculus (Mouse).